A 153-amino-acid polypeptide reads, in one-letter code: Aspartate carbamoyltransferase regulatory chain (153 aa).

Zn(2+) contacts are provided by cysteine 109, cysteine 114, cysteine 138, and cysteine 141.

The protein belongs to the PyrI family. In terms of assembly, contains catalytic and regulatory chains. Zn(2+) serves as cofactor.

Functionally, involved in allosteric regulation of aspartate carbamoyltransferase. This is Aspartate carbamoyltransferase regulatory chain from Escherichia coli (strain ATCC 8739 / DSM 1576 / NBRC 3972 / NCIMB 8545 / WDCM 00012 / Crooks).